The primary structure comprises 519 residues: T-box transcription factor TBX5 (519 aa).

The interval 1–46 (MADTEEAYGMPDTPVEAEPKELQCEPKQDNQLGASSKTPTSPPAAF) is disordered. Positions 17–28 (AEPKELQCEPKQ) are enriched in basic and acidic residues. The segment covering 29 to 39 (DNQLGASSKTP) has biased composition (polar residues). The T-box DNA-binding region spans 63-238 (LWLKFHEVGT…NNPFAKGFRG (176 aa)). 3 disordered regions span residues 254–282 (EYPV…RNIT), 293–312 (CENG…SAYT), and 326–372 (KRKV…TSFR). Positions 262–282 (TVRQKVSSNHSPFSQETRNIT) are enriched in polar residues. A compositionally biased stretch (low complexity) spans 298–309 (SSTSQDLLPSSS). A compositionally biased stretch (basic and acidic residues) spans 328-342 (KVSEEPAEHSYKKPY).

Monomer. Homodimer (via the T-box); binds DNA as homodimer.

It localises to the nucleus. The protein localises to the cytoplasm. DNA-binding protein that regulates the transcription of several genes and is involved in heart development and limb pattern formation. May bind to the core DNA motif of promoters. The protein is T-box transcription factor TBX5 (tbx5) of Xenopus laevis (African clawed frog).